The following is a 375-amino-acid chain: Succinyl-diaminopimelate desuccinylase (375 aa).

His66 contributes to the Zn(2+) binding site. Asp68 is an active-site residue. Asp99 provides a ligand contact to Zn(2+). Catalysis depends on Glu133, which acts as the Proton acceptor. Positions 134, 162, and 348 each coordinate Zn(2+).

Belongs to the peptidase M20A family. DapE subfamily. As to quaternary structure, homodimer. The cofactor is Zn(2+). Requires Co(2+) as cofactor.

The enzyme catalyses N-succinyl-(2S,6S)-2,6-diaminopimelate + H2O = (2S,6S)-2,6-diaminopimelate + succinate. The protein operates within amino-acid biosynthesis; L-lysine biosynthesis via DAP pathway; LL-2,6-diaminopimelate from (S)-tetrahydrodipicolinate (succinylase route): step 3/3. Catalyzes the hydrolysis of N-succinyl-L,L-diaminopimelic acid (SDAP), forming succinate and LL-2,6-diaminopimelate (DAP), an intermediate involved in the bacterial biosynthesis of lysine and meso-diaminopimelic acid, an essential component of bacterial cell walls. The chain is Succinyl-diaminopimelate desuccinylase from Janthinobacterium sp. (strain Marseille) (Minibacterium massiliensis).